Consider the following 328-residue polypeptide: Dihydroorotate dehydrogenase (quinone), mitochondrial (328 aa).

Residues alanine 21–alanine 38 form a helical membrane-spanning segment. FMN contacts are provided by residues alanine 61–lysine 65 and threonine 85. Lysine 65 contributes to the substrate binding site. A substrate-binding site is contributed by asparagine 110–phenylalanine 114. FMN contacts are provided by asparagine 139 and asparagine 170. Asparagine 170–asparagine 175 lines the substrate pocket. The Nucleophile role is filled by serine 173. FMN is bound by residues lysine 215 and serine 243. Position 244–245 (asparagine 244–threonine 245) interacts with substrate. FMN contacts are provided by glycine 266 and glycine 295.

It belongs to the dihydroorotate dehydrogenase family. Type 2 subfamily. The cofactor is FMN.

It is found in the mitochondrion inner membrane. It carries out the reaction (S)-dihydroorotate + a quinone = orotate + a quinol. The protein operates within pyrimidine metabolism; UMP biosynthesis via de novo pathway; orotate from (S)-dihydroorotate (quinone route): step 1/1. In terms of biological role, catalyzes the conversion of dihydroorotate to orotate with quinone as electron acceptor. The sequence is that of Dihydroorotate dehydrogenase (quinone), mitochondrial (URA1) from Cyclocybe aegerita (Black poplar mushroom).